Reading from the N-terminus, the 156-residue chain is Small ribosomal subunit protein uS7 (156 aa).

The protein belongs to the universal ribosomal protein uS7 family. As to quaternary structure, part of the 30S ribosomal subunit. Contacts proteins S9 and S11.

In terms of biological role, one of the primary rRNA binding proteins, it binds directly to 16S rRNA where it nucleates assembly of the head domain of the 30S subunit. Is located at the subunit interface close to the decoding center, probably blocks exit of the E-site tRNA. The sequence is that of Small ribosomal subunit protein uS7 from Clostridium novyi (strain NT).